Reading from the N-terminus, the 481-residue chain is Glutamate--tRNA ligase (481 aa).

The 'HIGH' region motif lies at 9–19 (PSPTGNLHIGT). Positions 247-251 (KLSKR) match the 'KMSKS' region motif. ATP is bound at residue Lys250.

It belongs to the class-I aminoacyl-tRNA synthetase family. Glutamate--tRNA ligase type 1 subfamily. Monomer.

It is found in the cytoplasm. It carries out the reaction tRNA(Glu) + L-glutamate + ATP = L-glutamyl-tRNA(Glu) + AMP + diphosphate. In terms of biological role, catalyzes the attachment of glutamate to tRNA(Glu) in a two-step reaction: glutamate is first activated by ATP to form Glu-AMP and then transferred to the acceptor end of tRNA(Glu). This is Glutamate--tRNA ligase from Nostoc punctiforme (strain ATCC 29133 / PCC 73102).